The chain runs to 114 residues: T cell receptor beta variable 5-6 (114 aa).

An N-terminal signal peptide occupies residues 1-21; that stretch reads MGPGLLCWALLCLLGAGLVDA. An Ig-like domain is found at 22–114; sequence GVTQSPTHLI…SALYLCASSL (93 aa). Cys-42 and Cys-110 are disulfide-bonded. Asn-90 carries an N-linked (GlcNAc...) asparagine glycan.

As to quaternary structure, alpha-beta TR is a heterodimer composed of an alpha and beta chain; disulfide-linked. The alpha-beta TR is associated with the transmembrane signaling CD3 coreceptor proteins to form the TR-CD3 (TcR or TCR). The assembly of alpha-beta TR heterodimers with CD3 occurs in the endoplasmic reticulum where a single alpha-beta TR heterodimer associates with one CD3D-CD3E heterodimer, one CD3G-CD3E heterodimer and one CD247 homodimer forming a stable octameric structure. CD3D-CD3E and CD3G-CD3E heterodimers preferentially associate with TR alpha and TR beta chains, respectively. The association of the CD247 homodimer is the last step of TcR assembly in the endoplasmic reticulum and is required for transport to the cell surface.

The protein resides in the cell membrane. V region of the variable domain of T cell receptor (TR) beta chain that participates in the antigen recognition. Alpha-beta T cell receptors are antigen specific receptors which are essential to the immune response and are present on the cell surface of T lymphocytes. Recognize peptide-major histocompatibility (MH) (pMH) complexes that are displayed by antigen presenting cells (APC), a prerequisite for efficient T cell adaptive immunity against pathogens. Binding of alpha-beta TR to pMH complex initiates TR-CD3 clustering on the cell surface and intracellular activation of LCK that phosphorylates the ITAM motifs of CD3G, CD3D, CD3E and CD247 enabling the recruitment of ZAP70. In turn ZAP70 phosphorylates LAT, which recruits numerous signaling molecules to form the LAT signalosome. The LAT signalosome propagates signal branching to three major signaling pathways, the calcium, the mitogen-activated protein kinase (MAPK) kinase and the nuclear factor NF-kappa-B (NF-kB) pathways, leading to the mobilization of transcription factors that are critical for gene expression and essential for T cell growth and differentiation. The T cell repertoire is generated in the thymus, by V-(D)-J rearrangement. This repertoire is then shaped by intrathymic selection events to generate a peripheral T cell pool of self-MH restricted, non-autoaggressive T cells. Post-thymic interaction of alpha-beta TR with the pMH complexes shapes TR structural and functional avidity. The chain is T cell receptor beta variable 5-6 from Homo sapiens (Human).